Consider the following 240-residue polypeptide: Probable transcriptional regulatory protein OEOE_0768 (240 aa).

The tract at residues 1-21 (MSGHSKWHNIQGRKNAQDAKR) is disordered.

The protein belongs to the TACO1 family.

The protein localises to the cytoplasm. This is Probable transcriptional regulatory protein OEOE_0768 from Oenococcus oeni (strain ATCC BAA-331 / PSU-1).